The following is a 598-amino-acid chain: DNA ligase (598 aa).

An ATP-binding site is contributed by Asp258. Residue Lys260 is the N6-AMP-lysine intermediate of the active site. Residues Arg265, Arg280, Glu310, Phe350, Arg427, and Lys433 each coordinate ATP.

This sequence belongs to the ATP-dependent DNA ligase family. Mg(2+) is required as a cofactor.

It carries out the reaction ATP + (deoxyribonucleotide)n-3'-hydroxyl + 5'-phospho-(deoxyribonucleotide)m = (deoxyribonucleotide)n+m + AMP + diphosphate.. Functionally, DNA ligase that seals nicks in double-stranded DNA during DNA replication, DNA recombination and DNA repair. This is DNA ligase from Sulfolobus acidocaldarius (strain ATCC 33909 / DSM 639 / JCM 8929 / NBRC 15157 / NCIMB 11770).